Here is a 426-residue protein sequence, read N- to C-terminus: Tyrosine--tRNA ligase (426 aa).

Tyr-35 provides a ligand contact to L-tyrosine. The 'HIGH' region motif lies at 40 to 49 (PTAPSLHIGH). L-tyrosine contacts are provided by Tyr-174 and Gln-178. Residues 234 to 238 (KFGKT) carry the 'KMSKS' region motif. Position 237 (Lys-237) interacts with ATP. An S4 RNA-binding domain is found at 358-418 (PRVVDALVAT…WAVIRRGRRA (61 aa)).

This sequence belongs to the class-I aminoacyl-tRNA synthetase family. TyrS type 1 subfamily. Homodimer.

Its subcellular location is the cytoplasm. The enzyme catalyses tRNA(Tyr) + L-tyrosine + ATP = L-tyrosyl-tRNA(Tyr) + AMP + diphosphate + H(+). In terms of biological role, catalyzes the attachment of tyrosine to tRNA(Tyr) in a two-step reaction: tyrosine is first activated by ATP to form Tyr-AMP and then transferred to the acceptor end of tRNA(Tyr). In Acidothermus cellulolyticus (strain ATCC 43068 / DSM 8971 / 11B), this protein is Tyrosine--tRNA ligase.